The primary structure comprises 751 residues: Pyridoxal-dependent decarboxylase domain-containing protein 1 (751 aa).

Positions 659–751 are disordered; it reads QMRKEDSPDS…QEAESVETIR (93 aa). Polar residues predominate over residues 690–702; the sequence is DSISETSSVSQLE. Residues 720–729 show a composition bias toward basic and acidic residues; it reads PQERPAHILE. Residues 742 to 751 show a composition bias toward acidic residues; sequence QEAESVETIR.

It belongs to the group II decarboxylase family. Pyridoxal 5'-phosphate is required as a cofactor.

The sequence is that of Pyridoxal-dependent decarboxylase domain-containing protein 1 (pdxdc1) from Danio rerio (Zebrafish).